A 474-amino-acid polypeptide reads, in one-letter code: ATP synthase subunit beta (474 aa).

155 to 162 contributes to the ATP binding site; the sequence is GGAGVGKT.

This sequence belongs to the ATPase alpha/beta chains family. As to quaternary structure, F-type ATPases have 2 components, CF(1) - the catalytic core - and CF(0) - the membrane proton channel. CF(1) has five subunits: alpha(3), beta(3), gamma(1), delta(1), epsilon(1). CF(0) has three main subunits: a(1), b(2) and c(9-12). The alpha and beta chains form an alternating ring which encloses part of the gamma chain. CF(1) is attached to CF(0) by a central stalk formed by the gamma and epsilon chains, while a peripheral stalk is formed by the delta and b chains.

The protein localises to the cell inner membrane. It carries out the reaction ATP + H2O + 4 H(+)(in) = ADP + phosphate + 5 H(+)(out). Produces ATP from ADP in the presence of a proton gradient across the membrane. The catalytic sites are hosted primarily by the beta subunits. The polypeptide is ATP synthase subunit beta (Sorangium cellulosum (strain So ce56) (Polyangium cellulosum (strain So ce56))).